Consider the following 61-residue polypeptide: Nakoroxin (61 aa).

4 cysteine pairs are disulfide-bonded: Cys-3/Cys-19, Cys-12/Cys-37, Cys-41/Cys-49, and Cys-50/Cys-55.

Belongs to the three-finger toxin family. Short-chain subfamily. As to expression, expressed by the venom gland.

Its subcellular location is the secreted. Functionally, shows no cytotoxicity and does not inhibit the binding of alpha-bungarotoxin to nicotinic acetylcholine receptors of muscle and alpha-7/CHRNA7 types. However, it potentiates the binding of alpha-bungarotoxin to the acetylcholine-binding protein from Lymnaea stagnalis. In Naja kaouthia (Monocled cobra), this protein is Nakoroxin.